A 291-amino-acid polypeptide reads, in one-letter code: 3-methylcatechol 2,3-dioxygenase (291 aa).

2 VOC domains span residues 5 to 119 and 143 to 264; these read RLGY…IYYG and GLGH…YGWG. Positions 146, 210, and 260 each coordinate Fe cation.

This sequence belongs to the extradiol ring-cleavage dioxygenase family. In terms of assembly, homooctamer. The cofactor is Fe(2+).

The enzyme catalyses 3-methylcatechol + O2 = 2-hydroxy-6-oxo-2,4-heptadienoate + H(+). It participates in xenobiotic degradation; toluene degradation. This chain is 3-methylcatechol 2,3-dioxygenase (todE), found in Pseudomonas putida (strain ATCC 700007 / DSM 6899 / JCM 31910 / BCRC 17059 / LMG 24140 / F1).